The chain runs to 332 residues: ATP-dependent (S)-NAD(P)H-hydrate dehydratase (332 aa).

Residues 46 to 326 form the YjeF C-terminal domain; sequence LLERARNIVP…EQIHNVFDDI (281 aa). Residues Gly-146 and 199–205 each bind (6S)-NADPHX; that span reads NAIEFCR. Residues 230-234 and 251-260 contribute to the ATP site; these read KGLND and GSGRRCGGQG. Asp-261 contributes to the (6S)-NADPHX binding site.

The protein belongs to the NnrD/CARKD family. It depends on Mg(2+) as a cofactor.

It catalyses the reaction (6S)-NADHX + ATP = ADP + phosphate + NADH + H(+). The catalysed reaction is (6S)-NADPHX + ATP = ADP + phosphate + NADPH + H(+). In terms of biological role, catalyzes the dehydration of the S-form of NAD(P)HX at the expense of ATP, which is converted to ADP. Together with NAD(P)HX epimerase, which catalyzes the epimerization of the S- and R-forms, the enzyme allows the repair of both epimers of NAD(P)HX, a damaged form of NAD(P)H that is a result of enzymatic or heat-dependent hydration. This Aedes aegypti (Yellowfever mosquito) protein is ATP-dependent (S)-NAD(P)H-hydrate dehydratase.